Consider the following 381-residue polypeptide: Probable cyclic AMP-AMP-GMP nucleotide synthase (381 aa).

GTP-binding residues include Ser-53 and Arg-56. Catalysis depends on residues Asp-69 and Asp-71. 2 residues coordinate Mg(2+): Asp-69 and Asp-71. Arg-109 serves as a coordination point for GTP. Asp-121 is a catalytic residue. Residues Asp-121 and Asp-196 each coordinate Mg(2+). GTP is bound by residues Arg-197, Arg-204, Thr-205, Gln-210, and Arg-307. Residues 348–381 (GTKFPFPGPQGGDRSGGFTAPTQPAEPQKTGRFA) form a disordered region.

Belongs to the CD-NTase family. D02 subfamily. Mg(2+) serves as cofactor.

The enzyme catalyses GTP + 2 ATP = 3',3',3'-cAAG + 3 diphosphate. Cyclic nucleotide synthase (second messenger synthase) of a CBASS antivirus system. CBASS (cyclic oligonucleotide-based antiphage signaling system) provides immunity against bacteriophage. The CD-NTase protein synthesizes cyclic nucleotides in response to infection; these serve as specific second messenger signals. The signals activate a diverse range of effectors, leading to bacterial cell death and thus abortive phage infection. Its function is as follows. Cyclic nucleotide synthase, synthesizes a tricyclic nucleotide with AMP and GMP moieties, probably 3',3',3'-cyclic AMP-AMP-GMP (3'3'3'-cAAG). Controls the activity of the associated CBASS effector protein. This is Probable cyclic AMP-AMP-GMP nucleotide synthase from Salmonella paratyphi B (Salmonella enterica subsp. enterica serovar Paratyphi B).